A 482-amino-acid polypeptide reads, in one-letter code: F-box/LRR-repeat protein At3g58930 (482 aa).

One can recognise an F-box domain in the interval 1–47 (MDRVSNLPDGVRGHILSFLPAKHIALTSVLSKSWLNLWKLIPILDID). LRR repeat units lie at residues 122-150 (SYED…KIRN), 175-200 (SDLI…RMAS), 222-248 (GTGC…NYSD), 313-344 (ILYL…GIKS), and 345-370 (EEGR…IIEG).

This Arabidopsis thaliana (Mouse-ear cress) protein is F-box/LRR-repeat protein At3g58930.